A 206-amino-acid chain; its full sequence is ATP phosphoribosyltransferase (206 aa).

Belongs to the ATP phosphoribosyltransferase family. Short subfamily. Heteromultimer composed of HisG and HisZ subunits.

Its subcellular location is the cytoplasm. It catalyses the reaction 1-(5-phospho-beta-D-ribosyl)-ATP + diphosphate = 5-phospho-alpha-D-ribose 1-diphosphate + ATP. Its pathway is amino-acid biosynthesis; L-histidine biosynthesis; L-histidine from 5-phospho-alpha-D-ribose 1-diphosphate: step 1/9. In terms of biological role, catalyzes the condensation of ATP and 5-phosphoribose 1-diphosphate to form N'-(5'-phosphoribosyl)-ATP (PR-ATP). Has a crucial role in the pathway because the rate of histidine biosynthesis seems to be controlled primarily by regulation of HisG enzymatic activity. This chain is ATP phosphoribosyltransferase, found in Sulfurovum sp. (strain NBC37-1).